Consider the following 634-residue polypeptide: DNA gyrase subunit B (634 aa).

The region spanning 416-530 is the Toprim domain; the sequence is REIYIVEGDS…NGYIYIAMPP (115 aa). Mg(2+)-binding residues include Glu-422, Asp-495, and Asp-497.

This sequence belongs to the type II topoisomerase GyrB family. As to quaternary structure, heterotetramer, composed of two GyrA and two GyrB chains. In the heterotetramer, GyrA contains the active site tyrosine that forms a transient covalent intermediate with DNA, while GyrB binds cofactors and catalyzes ATP hydrolysis. Mg(2+) is required as a cofactor. The cofactor is Mn(2+). It depends on Ca(2+) as a cofactor.

It is found in the cytoplasm. It carries out the reaction ATP-dependent breakage, passage and rejoining of double-stranded DNA.. Functionally, a type II topoisomerase that negatively supercoils closed circular double-stranded (ds) DNA in an ATP-dependent manner to modulate DNA topology and maintain chromosomes in an underwound state. Negative supercoiling favors strand separation, and DNA replication, transcription, recombination and repair, all of which involve strand separation. Also able to catalyze the interconversion of other topological isomers of dsDNA rings, including catenanes and knotted rings. Type II topoisomerases break and join 2 DNA strands simultaneously in an ATP-dependent manner. The sequence is that of DNA gyrase subunit B from Borreliella burgdorferi (strain ATCC 35210 / DSM 4680 / CIP 102532 / B31) (Borrelia burgdorferi).